The sequence spans 315 residues: MPKKIILDCDPGLDDAVAILLAHGNPEIELLAITTVVGNQTLAKVTRNAQLVADIAGITGVPIAAGCDKPLVRKIMTAGHIHGESGMGTVAYPAEFKNKVDERHAVNLIIDLVMSHEPKTITLVPTGGLTNIAMAARLEPRIVDRVKEVVLMGGGYHEGNATSVAEFNIIIDPEAAHIVFNESWQVTMVGLDLTHQALATPPILQRVKEVDTNPARFMLEIMDYYTKIYQSNRYMAAAAVHDPCAVAYVIDPSVMTTERVPVDIELTGKLTLGMTVADFRNPRPEHCHTQVAVKLDFEKFWGLVLDALERIGDPQ.

D10 is a binding site for Ca(2+). Position 14 (D14) interacts with substrate. Ca(2+) contacts are provided by D15 and T126. The substrate site is built by N160, E166, and N168. Residue H241 is the Proton donor of the active site. Residue D242 coordinates Ca(2+).

In terms of assembly, homotetramer. Ca(2+) is required as a cofactor.

The catalysed reaction is inosine + H2O = hypoxanthine + D-ribose. It catalyses the reaction uridine + H2O = D-ribose + uracil. Its pathway is purine metabolism; purine nucleoside salvage. In terms of biological role, catalyzes the hydrolysis of the N-glycosidic bond of commonly occurring purine and pyrimidine nucleosides into ribose and the base, but has a preference for inosine and uridine as substrates. Is not active on thymidine and 2'-deoxynucleosides. Functions in purine salvage from the blood of the host, a fundamental pathway since protozoan parasites such as C.fasciculata are incapable of de novo purine biosynthesis. In Crithidia fasciculata, this protein is Inosine-uridine preferring nucleoside hydrolase (IUNH).